The following is a 443-amino-acid chain: Anthocyanidin 3-O-glucoside 5-O-glucosyltransferase 2 (443 aa).

Residues 1-22 form the signal peptide; sequence MVRRRVLLATFPAQGHINPALQ. Residue H16 is the Proton acceptor of the active site. Residue H16 coordinates an anthocyanidin. Positions 340, 355, 358, 359, 360, 363, 379, and 380 each coordinate UDP-alpha-D-glucose.

The protein belongs to the UDP-glycosyltransferase family.

The catalysed reaction is an anthocyanidin 3-O-beta-D-glucoside + UDP-alpha-D-glucose = an anthocyanidin 3,5-di-O-beta-D-glucoside + UDP + 2 H(+). Its pathway is pigment biosynthesis; anthocyanin biosynthesis. Catalyzes the glucosylation at the O-5 position of anthocyanidin 3-glucosides to form anthocyanidin 3,5-di-O-glucosides using UDP-glucose as sugar donor. Anthocyanidin 3,5-di-O-glucosides are molecules that are responsible for pigmentation. Also acts on anthocyanidin 3-O-(6-O-malonylglucoside). Much less active with hydroxycinnamoylglucose derivatives. No activity in the absence of the 3-O-glucoside group. This Perilla frutescens (Beefsteak mint) protein is Anthocyanidin 3-O-glucoside 5-O-glucosyltransferase 2 (PF3R6).